The chain runs to 407 residues: Arginine biosynthesis bifunctional protein ArgJ (407 aa).

Residues T157, K183, T194, E280, N402, and T407 each coordinate substrate. T194 serves as the catalytic Nucleophile.

This sequence belongs to the ArgJ family. As to quaternary structure, heterotetramer of two alpha and two beta chains.

It localises to the cytoplasm. The enzyme catalyses N(2)-acetyl-L-ornithine + L-glutamate = N-acetyl-L-glutamate + L-ornithine. The catalysed reaction is L-glutamate + acetyl-CoA = N-acetyl-L-glutamate + CoA + H(+). The protein operates within amino-acid biosynthesis; L-arginine biosynthesis; L-ornithine and N-acetyl-L-glutamate from L-glutamate and N(2)-acetyl-L-ornithine (cyclic): step 1/1. It functions in the pathway amino-acid biosynthesis; L-arginine biosynthesis; N(2)-acetyl-L-ornithine from L-glutamate: step 1/4. Functionally, catalyzes two activities which are involved in the cyclic version of arginine biosynthesis: the synthesis of N-acetylglutamate from glutamate and acetyl-CoA as the acetyl donor, and of ornithine by transacetylation between N(2)-acetylornithine and glutamate. The polypeptide is Arginine biosynthesis bifunctional protein ArgJ (Oceanobacillus iheyensis (strain DSM 14371 / CIP 107618 / JCM 11309 / KCTC 3954 / HTE831)).